The sequence spans 261 residues: Cytochrome c oxidase subunit 3 (261 aa).

Over 1–15 (MTHQTHAYHMVDPSP) the chain is Mitochondrial matrix. Residues 16–34 (WPLTGALSALLMTSGLTMW) traverse the membrane as a helical segment. The Mitochondrial intermembrane portion of the chain corresponds to 35–40 (FHYHSV). The chain crosses the membrane as a helical span at residues 41–66 (VLLFLGLMTNTLTMFQWWRDVVREGT). At 67 to 72 (FQGHHT) the chain is on the mitochondrial matrix side. A helical transmembrane segment spans residues 73–105 (PVVQEGLRYGMILFITSEVLFFTGFFWAFYHSS). Topologically, residues 106–128 (LAPTPELGSYWPPVGVYPLNPLE) are mitochondrial intermembrane. The helical transmembrane segment at 129–152 (VPLLNTSVLLASGVTITWAHHSLM) threads the bilayer. Residues 153-155 (EGN) are Mitochondrial matrix-facing. A helical membrane pass occupies residues 156-183 (RKNMLQALLITILLGVYFTLLQMFEYYE). The Mitochondrial intermembrane segment spans residues 184–190 (ASFTISD). Residues 191-223 (GIYGSTFFVTTGFHGLHVIIGSTFLLTCFIRQL) form a helical membrane-spanning segment. At 224-232 (KFHFTSNHH) the chain is on the mitochondrial matrix side. Residues 233 to 256 (FGFEAAAWYWHFVDVVWLFLYLSI) form a helical membrane-spanning segment. Topologically, residues 257–261 (YWWGS) are mitochondrial intermembrane.

It belongs to the cytochrome c oxidase subunit 3 family. Component of the cytochrome c oxidase (complex IV, CIV), a multisubunit enzyme composed of 14 subunits. The complex is composed of a catalytic core of 3 subunits MT-CO1, MT-CO2 and MT-CO3, encoded in the mitochondrial DNA, and 11 supernumerary subunits COX4I, COX5A, COX5B, COX6A, COX6B, COX6C, COX7A, COX7B, COX7C, COX8 and NDUFA4, which are encoded in the nuclear genome. The complex exists as a monomer or a dimer and forms supercomplexes (SCs) in the inner mitochondrial membrane with NADH-ubiquinone oxidoreductase (complex I, CI) and ubiquinol-cytochrome c oxidoreductase (cytochrome b-c1 complex, complex III, CIII), resulting in different assemblies (supercomplex SCI(1)III(2)IV(1) and megacomplex MCI(2)III(2)IV(2)).

Its subcellular location is the mitochondrion inner membrane. The catalysed reaction is 4 Fe(II)-[cytochrome c] + O2 + 8 H(+)(in) = 4 Fe(III)-[cytochrome c] + 2 H2O + 4 H(+)(out). Component of the cytochrome c oxidase, the last enzyme in the mitochondrial electron transport chain which drives oxidative phosphorylation. The respiratory chain contains 3 multisubunit complexes succinate dehydrogenase (complex II, CII), ubiquinol-cytochrome c oxidoreductase (cytochrome b-c1 complex, complex III, CIII) and cytochrome c oxidase (complex IV, CIV), that cooperate to transfer electrons derived from NADH and succinate to molecular oxygen, creating an electrochemical gradient over the inner membrane that drives transmembrane transport and the ATP synthase. Cytochrome c oxidase is the component of the respiratory chain that catalyzes the reduction of oxygen to water. Electrons originating from reduced cytochrome c in the intermembrane space (IMS) are transferred via the dinuclear copper A center (CU(A)) of subunit 2 and heme A of subunit 1 to the active site in subunit 1, a binuclear center (BNC) formed by heme A3 and copper B (CU(B)). The BNC reduces molecular oxygen to 2 water molecules using 4 electrons from cytochrome c in the IMS and 4 protons from the mitochondrial matrix. This Mammuthus primigenius (Siberian woolly mammoth) protein is Cytochrome c oxidase subunit 3 (MT-CO3).